We begin with the raw amino-acid sequence, 193 residues long: Protein D5 (193 aa).

In terms of biological role, repression of replication initiation (possible). The protein is Protein D5 (ddpE) of Dictyostelium discoideum (Social amoeba).